Reading from the N-terminus, the 30-residue chain is Sillucin (30 aa).

4 disulfides stabilise this stretch: cysteine 2–cysteine 7, cysteine 12–cysteine 24, cysteine 13–cysteine 30, and cysteine 14–cysteine 21.

It is found in the secreted. Its function is as follows. Sillucin is an antimicrobial agent produced by the thermophilic fungus Rhizomucor pusillus in liquid culture; it is effective against Gram-positive bacteria at the level of RNA metabolism. This is Sillucin from Rhizomucor pusillus.